The sequence spans 362 residues: MLKNKGHSSKKDNLAVNAVALQDHILHDLQLRNLSVADHSKTQVQKKENKSLKRDTKAIIDTGLKKTTQCPKLEDSEKEYVLDPKPPPLTLAQKLGLIGPPPPPLSSDEWEKVKQRSLLQGDSVQPCPICKEEFELRPQVLLSCSHVFHKACLQAFEKFTNKKTCPLCRKNQYQTRVIHDGARLFRIKCVTRIQAYWRGCVVRKWYRNLRKTVPPTDAKLRKKFFEKKFTEISHRILCSYNTNIEELFAEIDQCLAINRSVLQQLEEKCGHEITEEEWEKIQVQALRRETHECSICLAPLSAAGGQRVGAGRRSREMALLSCSHVFHHACLLALEEFSVGDRPPFHACPLCRSCYQKKILEC.

The RING-type 1; atypical zinc finger occupies 127–169; it reads CPICKEEFELRPQVLLSCSHVFHKACLQAFEKFTNKKTCPLCR. An IQ domain is found at 186-215; that stretch reads RIKCVTRIQAYWRGCVVRKWYRNLRKTVPP. The RING-type 2; atypical zinc finger occupies 293–352; sequence CSICLAPLSAAGGQRVGAGRRSREMALLSCSHVFHHACLLALEEFSVGDRPPFHACPLCR.

In terms of tissue distribution, highly expressed in testis, less abundant in ovary.

The protein resides in the cytoplasm. In terms of biological role, may play a role in sperm formation. This is RING finger protein 32 (RNF32) from Homo sapiens (Human).